Reading from the N-terminus, the 613-residue chain is TANK-binding kinase 1-binding protein 1 (613 aa).

The tract at residues Met-1–Cys-280 is homodimerization. The stretch at Tyr-48–Ile-162 forms a coiled coil. Ser-184 carries the phosphoserine modification. A coiled-coil region spans residues Thr-218–Gln-277. The tract at residues Gly-281–Asn-330 is interaction with TBK1 and IKBKE. Positions Ala-328–Arg-457 are disordered. Pro residues predominate over residues Pro-346 to Ala-361. Residues Pro-362 to Ser-372 show a composition bias toward low complexity. A phosphoserine mark is found at Ser-365, Ser-372, Ser-379, Ser-385, Ser-400, and Ser-415. Positions Pro-389–Cys-406 are enriched in pro residues. A compositionally biased stretch (pro residues) spans Pro-416–Gly-433. A phosphoserine mark is found at Ser-502 and Ser-532. Residues Ile-581 to His-607 form a UBZ1-type zinc finger. Cys-584, Cys-587, His-603, and His-607 together coordinate Zn(2+).

In terms of assembly, homodimer. May form a heterodimer with NAP1. Interacts with TKB1 and IKBKE. Weakly interacts with DDX3X.

In terms of biological role, adapter protein which constitutively binds TBK1 and IKBKE playing a role in antiviral innate immunity. Essential for the efficient induction of IRF-dependent transcription following infection with Sendai virus. The protein is TANK-binding kinase 1-binding protein 1 of Rattus norvegicus (Rat).